Consider the following 98-residue polypeptide: NADH-ubiquinone oxidoreductase chain 4L (98 aa).

The next 3 membrane-spanning stretches (helical) occupy residues 1-21 (MPLISTNILLAFITALLGVLI), 26-46 (LMSSLLCLEGMMLSMFILVSL), and 61-81 (LILLVFAACEAAVGLALLVMV).

It belongs to the complex I subunit 4L family. As to quaternary structure, core subunit of respiratory chain NADH dehydrogenase (Complex I) which is composed of 45 different subunits.

The protein resides in the mitochondrion inner membrane. The catalysed reaction is a ubiquinone + NADH + 5 H(+)(in) = a ubiquinol + NAD(+) + 4 H(+)(out). Core subunit of the mitochondrial membrane respiratory chain NADH dehydrogenase (Complex I) which catalyzes electron transfer from NADH through the respiratory chain, using ubiquinone as an electron acceptor. Part of the enzyme membrane arm which is embedded in the lipid bilayer and involved in proton translocation. This is NADH-ubiquinone oxidoreductase chain 4L (MT-ND4L) from Nycticebus coucang (Slow loris).